The sequence spans 162 residues: Cyclic pyranopterin monophosphate synthase (162 aa).

Substrate contacts are provided by residues 79-81 (LCH) and 117-118 (ME). Asp132 is an active-site residue.

The protein belongs to the MoaC family. As to quaternary structure, homohexamer; trimer of dimers.

It catalyses the reaction (8S)-3',8-cyclo-7,8-dihydroguanosine 5'-triphosphate = cyclic pyranopterin phosphate + diphosphate. It participates in cofactor biosynthesis; molybdopterin biosynthesis. Catalyzes the conversion of (8S)-3',8-cyclo-7,8-dihydroguanosine 5'-triphosphate to cyclic pyranopterin monophosphate (cPMP). In Bordetella avium (strain 197N), this protein is Cyclic pyranopterin monophosphate synthase.